Consider the following 87-residue polypeptide: Small ribosomal subunit protein bS18 (87 aa).

The segment covering 1 to 20 (MAGKSSGDRRKPIRKGKDGK) has biased composition (basic and acidic residues). Residues 1–24 (MAGKSSGDRRKPIRKGKDGKNAAP) are disordered.

This sequence belongs to the bacterial ribosomal protein bS18 family. As to quaternary structure, part of the 30S ribosomal subunit. Forms a tight heterodimer with protein bS6.

Its function is as follows. Binds as a heterodimer with protein bS6 to the central domain of the 16S rRNA, where it helps stabilize the platform of the 30S subunit. This Leifsonia xyli subsp. xyli (strain CTCB07) protein is Small ribosomal subunit protein bS18.